The primary structure comprises 269 residues: ATP synthase subunit delta (269 aa).

Belongs to the ATPase delta chain family. F-type ATPases have 2 components, F(1) - the catalytic core - and F(0) - the membrane proton channel. F(1) has five subunits: alpha(3), beta(3), gamma(1), delta(1), epsilon(1). F(0) has three main subunits: a(1), b(2) and c(10-14). The alpha and beta chains form an alternating ring which encloses part of the gamma chain. F(1) is attached to F(0) by a central stalk formed by the gamma and epsilon chains, while a peripheral stalk is formed by the delta and b chains.

It is found in the cell membrane. In terms of biological role, f(1)F(0) ATP synthase produces ATP from ADP in the presence of a proton or sodium gradient. F-type ATPases consist of two structural domains, F(1) containing the extramembraneous catalytic core and F(0) containing the membrane proton channel, linked together by a central stalk and a peripheral stalk. During catalysis, ATP synthesis in the catalytic domain of F(1) is coupled via a rotary mechanism of the central stalk subunits to proton translocation. Its function is as follows. This protein is part of the stalk that links CF(0) to CF(1). It either transmits conformational changes from CF(0) to CF(1) or is implicated in proton conduction. The protein is ATP synthase subunit delta of Thermobifida fusca (strain YX).